The chain runs to 1228 residues: ABC transporter B family member 16 (1228 aa).

Helical transmembrane passes span 22 to 42 (MGLG…LFFI), 69 to 89 (LAML…GYCW), 145 to 167 (LPNI…MLLW), 171 to 193 (IVGF…ALIG), 251 to 271 (GIAI…TWYG), and 283 to 303 (GTVS…GQAL). The 290-residue stretch at 22-311 (MGLGLIGAVG…ALSNLKYFSE (290 aa)) folds into the ABC transmembrane type-1 1 domain. Positions 346–582 (VEFNNVKCKY…DGKYTSLVRL (237 aa)) constitute an ABC transporter 1 domain. ATP is bound at residue 381–388 (GGSGSGKS). 3 N-linked (GlcNAc...) asparagine glycosylation sites follow: Asn529, Asn593, and Asn628. The ABC transmembrane type-1 2 domain maps to 658–946 (ALCGCLSASL…AGTMTTDLAK (289 aa)). Helical transmembrane passes span 667–687 (LGGA…SVFF) and 700–720 (IYVL…ISQQ). Asn755 carries an N-linked (GlcNAc...) asparagine glycan. 2 helical membrane passes run 781–801 (LLVQ…VIAW) and 805–825 (IVMI…RVLL). A glycan (N-linked (GlcNAc...) asparagine) is linked at Asn827. A run of 2 helical transmembrane segments spans residues 881 to 901 (SWLA…TSAL) and 920 to 940 (FFEL…AGTM). The 239-residue stretch at 981–1219 (ITFLNVDFAY…GPTGSYFSLV (239 aa)) folds into the ABC transporter 2 domain. Asn1001 is a glycosylation site (N-linked (GlcNAc...) asparagine). 1016 to 1023 (GPSRSGKS) provides a ligand contact to ATP.

The protein belongs to the ABC transporter superfamily. ABCB family. Multidrug resistance exporter (TC 3.A.1.201) subfamily.

The protein localises to the membrane. The protein is ABC transporter B family member 16 (ABCB16) of Arabidopsis thaliana (Mouse-ear cress).